The following is a 312-amino-acid chain: Taste receptor type 2 member 103 (312 aa).

Over 1 to 6 (MVLTIR) the chain is Extracellular. A helical transmembrane segment spans residues 7–27 (AILWVTLITIISLEFIIGILG). The Cytoplasmic portion of the chain corresponds to 28 to 61 (NVFIALVNIIDWVKRGKISAVDKTYMALAISRTA). Residues 62–82 (FLLSLITGFLVSLLDPALLGM) traverse the membrane as a helical segment. The Extracellular portion of the chain corresponds to 83-92 (RTMVRLLTIS). The chain crosses the membrane as a helical span at residues 93 to 113 (WMVTNHFSVWFATCLSIFYFL). Residues 114-132 (KIANFSNSIFLVLKWEAKK) are Cytoplasmic-facing. Residues 133 to 153 (VVSVTLVVSVIILIMNIIVIN) traverse the membrane as a helical segment. At 154-185 (KFTDRLQVNTLQNCSTSNTLKDYGLFLFISTG) the chain is on the extracellular side. Asn166 is a glycosylation site (N-linked (GlcNAc...) asparagine). A helical membrane pass occupies residues 186–206 (FTLTPFAVSLTMFLLLIFSLW). Residues 207–229 (RHLKNMCHSATGSRDVSTVAHIK) are Cytoplasmic-facing. The helical transmembrane segment at 230–250 (GLQTVVTFLLLYTAFVMSLLS) threads the bilayer. Over 251-264 (ESLNINIQHTNLLS) the chain is Extracellular. The helical transmembrane segment at 265–285 (HFLRSIGVAFPTGHSCVLILG) threads the bilayer. At 286–312 (NSKLRQASLSVILWLRYKYKHIENWGP) the chain is on the cytoplasmic side.

This sequence belongs to the G-protein coupled receptor T2R family. In terms of tissue distribution, expressed in subsets of taste receptor cells of the tongue and palate epithelium and exclusively in gustducin-positive cells. Expressed in 15% taste bud cells in circumvallate and foliate papillae but only in 2% in fungiform papillae.

It localises to the membrane. In terms of biological role, gustducin-coupled receptor implicated in the perception of bitter compounds in the oral cavity and the gastrointestinal tract. Signals through PLCB2 and the calcium-regulated cation channel TRPM5. The sequence is that of Taste receptor type 2 member 103 (Tas2r103) from Mus musculus (Mouse).